Consider the following 541-residue polypeptide: 2-isopropylmalate synthase (541 aa).

One can recognise a Pyruvate carboxyltransferase domain in the interval 8–284; that stretch reads VIIFDTTLRD…LTNINTRHIY (277 aa). D17, H208, H210, and N244 together coordinate Mn(2+). The segment at 408 to 541 is regulatory domain; that stretch reads RLELVQVSCG…DQPTEVVAGS (134 aa).

This sequence belongs to the alpha-IPM synthase/homocitrate synthase family. LeuA type 1 subfamily. As to quaternary structure, homodimer. Mn(2+) serves as cofactor.

Its subcellular location is the cytoplasm. The enzyme catalyses 3-methyl-2-oxobutanoate + acetyl-CoA + H2O = (2S)-2-isopropylmalate + CoA + H(+). Its pathway is amino-acid biosynthesis; L-leucine biosynthesis; L-leucine from 3-methyl-2-oxobutanoate: step 1/4. Catalyzes the condensation of the acetyl group of acetyl-CoA with 3-methyl-2-oxobutanoate (2-ketoisovalerate) to form 3-carboxy-3-hydroxy-4-methylpentanoate (2-isopropylmalate). This chain is 2-isopropylmalate synthase, found in Trichodesmium erythraeum (strain IMS101).